A 227-amino-acid chain; its full sequence is Cytochrome c oxidase subunit 2 (227 aa).

Residues methionine 1–serine 14 are Mitochondrial intermembrane-facing. A helical membrane pass occupies residues proline 15 to methionine 45. Residues leucine 46–glutamine 59 lie on the Mitochondrial matrix side of the membrane. A helical membrane pass occupies residues glutamate 60 to methionine 87. The Mitochondrial intermembrane segment spans residues aspartate 88–isoleucine 227. Cu cation-binding residues include histidine 161, cysteine 196, glutamate 198, cysteine 200, histidine 204, and methionine 207. Glutamate 198 is a Mg(2+) binding site.

The protein belongs to the cytochrome c oxidase subunit 2 family. In terms of assembly, component of the cytochrome c oxidase (complex IV, CIV), a multisubunit enzyme composed of 14 subunits. The complex is composed of a catalytic core of 3 subunits MT-CO1, MT-CO2 and MT-CO3, encoded in the mitochondrial DNA, and 11 supernumerary subunits COX4I, COX5A, COX5B, COX6A, COX6B, COX6C, COX7A, COX7B, COX7C, COX8 and NDUFA4, which are encoded in the nuclear genome. The complex exists as a monomer or a dimer and forms supercomplexes (SCs) in the inner mitochondrial membrane with NADH-ubiquinone oxidoreductase (complex I, CI) and ubiquinol-cytochrome c oxidoreductase (cytochrome b-c1 complex, complex III, CIII), resulting in different assemblies (supercomplex SCI(1)III(2)IV(1) and megacomplex MCI(2)III(2)IV(2)). Found in a complex with TMEM177, COA6, COX18, COX20, SCO1 and SCO2. Interacts with TMEM177 in a COX20-dependent manner. Interacts with COX20. Interacts with COX16. It depends on Cu cation as a cofactor.

The protein resides in the mitochondrion inner membrane. It carries out the reaction 4 Fe(II)-[cytochrome c] + O2 + 8 H(+)(in) = 4 Fe(III)-[cytochrome c] + 2 H2O + 4 H(+)(out). Functionally, component of the cytochrome c oxidase, the last enzyme in the mitochondrial electron transport chain which drives oxidative phosphorylation. The respiratory chain contains 3 multisubunit complexes succinate dehydrogenase (complex II, CII), ubiquinol-cytochrome c oxidoreductase (cytochrome b-c1 complex, complex III, CIII) and cytochrome c oxidase (complex IV, CIV), that cooperate to transfer electrons derived from NADH and succinate to molecular oxygen, creating an electrochemical gradient over the inner membrane that drives transmembrane transport and the ATP synthase. Cytochrome c oxidase is the component of the respiratory chain that catalyzes the reduction of oxygen to water. Electrons originating from reduced cytochrome c in the intermembrane space (IMS) are transferred via the dinuclear copper A center (CU(A)) of subunit 2 and heme A of subunit 1 to the active site in subunit 1, a binuclear center (BNC) formed by heme A3 and copper B (CU(B)). The BNC reduces molecular oxygen to 2 water molecules using 4 electrons from cytochrome c in the IMS and 4 protons from the mitochondrial matrix. The sequence is that of Cytochrome c oxidase subunit 2 (MT-CO2) from Anisomys imitator (Uneven-toothed rat).